The following is a 468-amino-acid chain: Tripartite motif-containing protein 75 (468 aa).

The RING-type zinc finger occupies 16–57 (CSICLDYLSDPVTIECGHNFCRSCIQQSWLDLQELFPCPVCR). The B box-type zinc finger occupies 92 to 133 (EETTLCEKHNQPLSVFCKEDLMVLCPLCTQPPDHQGHHVRPI). 4 residues coordinate Zn(2+): Cys-97, His-100, Cys-119, and His-125. Residues 170–222 (LELREMVENQRQELSSEFEHLNQFLDREQQAVLSRLAEEEKDNQQKLSANITA) are a coiled coil. A B30.2/SPRY domain is found at 276 to 468 (CSFPPQYSAL…LRICTGTVCE (193 aa)).

This sequence belongs to the TRIM/RBCC family.

The protein localises to the cytoplasm. It is found in the cytoskeleton. It localises to the spindle. Functionally, may play a role in female meiosis. The protein is Tripartite motif-containing protein 75 of Homo sapiens (Human).